Consider the following 1106-residue polypeptide: Carbamoyl phosphate synthase large chain (1106 aa).

A carboxyphosphate synthetic domain region spans residues methionine 1–glutamate 402. ATP is bound by residues arginine 129, arginine 169, glycine 175, glycine 176, glutamate 208, valine 210, glutamate 215, glycine 241, valine 242, histidine 243, glutamine 285, and glutamate 299. The ATP-grasp 1 domain maps to lysine 133–isoleucine 328. Mg(2+) contacts are provided by glutamine 285, glutamate 299, and asparagine 301. Mn(2+) is bound by residues glutamine 285, glutamate 299, and asparagine 301. An oligomerization domain region spans residues isoleucine 403 to serine 582. The interval aspartate 583–glycine 964 is carbamoyl phosphate synthetic domain. Positions valine 707–methionine 898 constitute an ATP-grasp 2 domain. ATP-binding residues include arginine 743, serine 782, leucine 784, glutamate 789, glycine 814, isoleucine 815, histidine 816, serine 817, glutamine 857, and glutamate 869. Positions 857, 869, and 871 each coordinate Mg(2+). Residues glutamine 857, glutamate 869, and asparagine 871 each coordinate Mn(2+). The MGS-like domain maps to aspartate 965 to leucine 1106. An allosteric domain region spans residues aspartate 965–leucine 1106.

The protein belongs to the CarB family. Composed of two chains; the small (or glutamine) chain promotes the hydrolysis of glutamine to ammonia, which is used by the large (or ammonia) chain to synthesize carbamoyl phosphate. Tetramer of heterodimers (alpha,beta)4. Requires Mg(2+) as cofactor. Mn(2+) is required as a cofactor.

It catalyses the reaction hydrogencarbonate + L-glutamine + 2 ATP + H2O = carbamoyl phosphate + L-glutamate + 2 ADP + phosphate + 2 H(+). It carries out the reaction hydrogencarbonate + NH4(+) + 2 ATP = carbamoyl phosphate + 2 ADP + phosphate + 2 H(+). The protein operates within amino-acid biosynthesis; L-arginine biosynthesis; carbamoyl phosphate from bicarbonate: step 1/1. It functions in the pathway pyrimidine metabolism; UMP biosynthesis via de novo pathway; (S)-dihydroorotate from bicarbonate: step 1/3. In terms of biological role, large subunit of the glutamine-dependent carbamoyl phosphate synthetase (CPSase). CPSase catalyzes the formation of carbamoyl phosphate from the ammonia moiety of glutamine, carbonate, and phosphate donated by ATP, constituting the first step of 2 biosynthetic pathways, one leading to arginine and/or urea and the other to pyrimidine nucleotides. The large subunit (synthetase) binds the substrates ammonia (free or transferred from glutamine from the small subunit), hydrogencarbonate and ATP and carries out an ATP-coupled ligase reaction, activating hydrogencarbonate by forming carboxy phosphate which reacts with ammonia to form carbamoyl phosphate. In Leptospira interrogans serogroup Icterohaemorrhagiae serovar copenhageni (strain Fiocruz L1-130), this protein is Carbamoyl phosphate synthase large chain.